The primary structure comprises 541 residues: Glucose-6-phosphate isomerase (541 aa).

The active-site Proton donor is the Glu346. Catalysis depends on residues His377 and Lys506.

The protein belongs to the GPI family.

The protein resides in the cytoplasm. The catalysed reaction is alpha-D-glucose 6-phosphate = beta-D-fructose 6-phosphate. It participates in carbohydrate biosynthesis; gluconeogenesis. Its pathway is carbohydrate degradation; glycolysis; D-glyceraldehyde 3-phosphate and glycerone phosphate from D-glucose: step 2/4. In terms of biological role, catalyzes the reversible isomerization of glucose-6-phosphate to fructose-6-phosphate. In Rhizobium etli (strain CIAT 652), this protein is Glucose-6-phosphate isomerase.